We begin with the raw amino-acid sequence, 343 residues long: Heat-inducible transcription repressor HrcA (343 aa).

The protein belongs to the HrcA family.

In terms of biological role, negative regulator of class I heat shock genes (grpE-dnaK-dnaJ and groELS operons). Prevents heat-shock induction of these operons. This chain is Heat-inducible transcription repressor HrcA, found in Mycolicibacterium gilvum (strain PYR-GCK) (Mycobacterium gilvum (strain PYR-GCK)).